Consider the following 98-residue polypeptide: Acylphosphatase (98 aa).

Residues 12–98 enclose the Acylphosphatase-like domain; that stretch reads TYYVRVRGVV…EKRFERFQQQ (87 aa). Residues R27 and N45 contribute to the active site.

Belongs to the acylphosphatase family.

It catalyses the reaction an acyl phosphate + H2O = a carboxylate + phosphate + H(+). This Burkholderia cenocepacia (strain HI2424) protein is Acylphosphatase (acyP).